The following is a 130-amino-acid chain: Small ribosomal subunit protein uS11c (130 aa).

The protein belongs to the universal ribosomal protein uS11 family. In terms of assembly, part of the 30S ribosomal subunit.

Its subcellular location is the plastid. It is found in the chloroplast. This chain is Small ribosomal subunit protein uS11c, found in Stigeoclonium helveticum (Green alga).